We begin with the raw amino-acid sequence, 118 residues long: Myotrophin (118 aa).

ANK repeat units follow at residues Met1 to Arg30, Gly34 to Asp65, and His67 to Gly98.

Belongs to the myotrophin family.

The protein resides in the cytoplasm. It localises to the nucleus. The protein localises to the perinuclear region. Functionally, regulates NF-kappa-B transcription factor activity. Promotes growth of cardiomyocytes, but not cardiomyocyte proliferation. Promotes cardiac muscle hypertrophy. Plays a role in the regulation of the growth of actin filaments. Inhibits the activity of the F-actin-capping protein complex. The sequence is that of Myotrophin (MTPN) from Gallus gallus (Chicken).